Reading from the N-terminus, the 97-residue chain is UPF0235 protein DET1292 (97 aa).

This sequence belongs to the UPF0235 family.

In Dehalococcoides mccartyi (strain ATCC BAA-2266 / KCTC 15142 / 195) (Dehalococcoides ethenogenes (strain 195)), this protein is UPF0235 protein DET1292.